A 226-amino-acid polypeptide reads, in one-letter code: RLA class II histocompatibility antigen, DP alpha-1 chain (226 aa).

Residues 1-189 are Extracellular-facing; the sequence is EHVSVFVIFA…PIQMPETTET (189 aa). N-linked (GlcNAc...) asparagine glycans are attached at residues asparagine 75 and asparagine 115. Residues 84 to 176 form the Ig-like C1-type domain; the sequence is PEVIVFPKEP…LDAPLLTHWE (93 aa). Cysteine 104 and cysteine 160 are joined by a disulfide. The chain crosses the membrane as a helical span at residues 190–210; that stretch reads VVCALGLVVGLAGVVVGIVLI. The Cytoplasmic segment spans residues 211 to 226; the sequence is TKALRSSPDPRARRPL.

This sequence belongs to the MHC class II family.

The protein localises to the membrane. The polypeptide is RLA class II histocompatibility antigen, DP alpha-1 chain (Oryctolagus cuniculus (Rabbit)).